A 307-amino-acid chain; its full sequence is N-acetylmuramic acid 6-phosphate etherase 2 (307 aa).

Positions 62 to 225 constitute an SIS domain; it reads ITAAFKQGGR…TTASMIRLGK (164 aa). Glu-90 acts as the Proton donor in catalysis. Glu-121 is a catalytic residue.

Belongs to the GCKR-like family. MurNAc-6-P etherase subfamily. Homodimer.

The enzyme catalyses N-acetyl-D-muramate 6-phosphate + H2O = N-acetyl-D-glucosamine 6-phosphate + (R)-lactate. It participates in amino-sugar metabolism; 1,6-anhydro-N-acetylmuramate degradation. Its pathway is amino-sugar metabolism; N-acetylmuramate degradation. It functions in the pathway cell wall biogenesis; peptidoglycan recycling. Functionally, specifically catalyzes the cleavage of the D-lactyl ether substituent of MurNAc 6-phosphate, producing GlcNAc 6-phosphate and D-lactate. Together with AnmK, is also required for the utilization of anhydro-N-acetylmuramic acid (anhMurNAc) either imported from the medium or derived from its own cell wall murein, and thus plays a role in cell wall recycling. This Vibrio cholerae serotype O1 (strain ATCC 39315 / El Tor Inaba N16961) protein is N-acetylmuramic acid 6-phosphate etherase 2.